Consider the following 351-residue polypeptide: Beta-hexosaminidase (351 aa).

Substrate is bound by residues Asp-62, Arg-70, Arg-134, and Lys-164–His-165. His-177 acts as the Proton donor/acceptor in catalysis. Asp-249 (nucleophile) is an active-site residue.

Belongs to the glycosyl hydrolase 3 family. NagZ subfamily. As to quaternary structure, monomer.

The protein localises to the cytoplasm. It carries out the reaction Hydrolysis of terminal non-reducing N-acetyl-D-hexosamine residues in N-acetyl-beta-D-hexosaminides.. It functions in the pathway cell wall biogenesis; peptidoglycan recycling. Plays a role in peptidoglycan recycling by cleaving the terminal beta-1,4-linked N-acetylglucosamine (GlcNAc) from peptide-linked peptidoglycan fragments, giving rise to free GlcNAc, anhydro-N-acetylmuramic acid and anhydro-N-acetylmuramic acid-linked peptides. The protein is Beta-hexosaminidase of Pasteurella multocida (strain Pm70).